An 80-amino-acid chain; its full sequence is Serine protease inhibitor Kazal-type 1 (80 aa).

A signal peptide spans 1 to 23 (MKVAVIFLLSALALLSLAGNTFS). One can recognise a Kazal-like domain in the interval 27 to 80 (TGKEASCHDAVAGCPRIYDPVCGTDGITYANECVLCFENRKRIEPVLIRKGGPC). 3 disulfides stabilise this stretch: Cys-33/Cys-62, Cys-40/Cys-59, and Cys-48/Cys-80.

In the genital tract, expressed only in male accessory glands including seminal vesicle, coagulating gland and prostate.

It is found in the secreted. Serine protease inhibitor which exhibits anti-trypsin activity. In the pancreas, protects against trypsin-catalyzed premature activation of zymogens. In terms of biological role, in the male reproductive tract, binds to sperm heads where it modulates sperm capacitance by inhibiting calcium uptake and nitrogen oxide (NO) production. The sequence is that of Serine protease inhibitor Kazal-type 1 from Mus musculus (Mouse).